The primary structure comprises 261 residues: Cytochrome c oxidase subunit 3 (261 aa).

The Mitochondrial matrix portion of the chain corresponds to 1 to 15 (MAHQAHAYHMVDPSP). A helical transmembrane segment spans residues 16 to 34 (WPLTGAIAALLLTSGTAVW). Over 35–40 (FHFHSL) the chain is Mitochondrial intermembrane. Residues 41 to 66 (TLLTLGNILLLLTMYQWWRDIIREGT) traverse the membrane as a helical segment. Topologically, residues 67 to 72 (FQGHHT) are mitochondrial matrix. Residues 73 to 105 (PPVQKGLRYGMILFITSEVFFFLGFFWAFYHAS) form a helical membrane-spanning segment. At 106–128 (LAPTPELGGCWPPTGITTLDPFE) the chain is on the mitochondrial intermembrane side. Residues 129–152 (VPLLNTAVLLASGVTVTWAHHSIM) traverse the membrane as a helical segment. Over 153–155 (EGE) the chain is Mitochondrial matrix. A helical transmembrane segment spans residues 156–183 (RKQTIQALTLTILLGFYFTFLQGMEYYE). Topologically, residues 184–190 (APFTIAD) are mitochondrial intermembrane. Residues 191–223 (GVYGSTFFVATGFHGLHVIIGSTFLAVCLLRQV) traverse the membrane as a helical segment. The Mitochondrial matrix segment spans residues 224-232 (QYHFTSEHH). The chain crosses the membrane as a helical span at residues 233-256 (FGFEAAAWYWHFVDVVWLFLYVSI). Residues 257–261 (YWWGS) lie on the Mitochondrial intermembrane side of the membrane.

It belongs to the cytochrome c oxidase subunit 3 family. As to quaternary structure, component of the cytochrome c oxidase (complex IV, CIV), a multisubunit enzyme composed of 14 subunits. The complex is composed of a catalytic core of 3 subunits MT-CO1, MT-CO2 and MT-CO3, encoded in the mitochondrial DNA, and 11 supernumerary subunits COX4I, COX5A, COX5B, COX6A, COX6B, COX6C, COX7A, COX7B, COX7C, COX8 and NDUFA4, which are encoded in the nuclear genome. The complex exists as a monomer or a dimer and forms supercomplexes (SCs) in the inner mitochondrial membrane with NADH-ubiquinone oxidoreductase (complex I, CI) and ubiquinol-cytochrome c oxidoreductase (cytochrome b-c1 complex, complex III, CIII), resulting in different assemblies (supercomplex SCI(1)III(2)IV(1) and megacomplex MCI(2)III(2)IV(2)).

The protein localises to the mitochondrion inner membrane. It catalyses the reaction 4 Fe(II)-[cytochrome c] + O2 + 8 H(+)(in) = 4 Fe(III)-[cytochrome c] + 2 H2O + 4 H(+)(out). Its function is as follows. Component of the cytochrome c oxidase, the last enzyme in the mitochondrial electron transport chain which drives oxidative phosphorylation. The respiratory chain contains 3 multisubunit complexes succinate dehydrogenase (complex II, CII), ubiquinol-cytochrome c oxidoreductase (cytochrome b-c1 complex, complex III, CIII) and cytochrome c oxidase (complex IV, CIV), that cooperate to transfer electrons derived from NADH and succinate to molecular oxygen, creating an electrochemical gradient over the inner membrane that drives transmembrane transport and the ATP synthase. Cytochrome c oxidase is the component of the respiratory chain that catalyzes the reduction of oxygen to water. Electrons originating from reduced cytochrome c in the intermembrane space (IMS) are transferred via the dinuclear copper A center (CU(A)) of subunit 2 and heme A of subunit 1 to the active site in subunit 1, a binuclear center (BNC) formed by heme A3 and copper B (CU(B)). The BNC reduces molecular oxygen to 2 water molecules using 4 electrons from cytochrome c in the IMS and 4 protons from the mitochondrial matrix. This is Cytochrome c oxidase subunit 3 (mt-co3) from Oncorhynchus clarkii (Cutthroat trout).